The chain runs to 925 residues: Antiviral innate immune response receptor RIG-I (925 aa).

CARD domains are found at residues 1–87 and 92–172; these read MTTE…GLYE and WDFK…KTLK. Residue serine 8 is modified to (Microbial infection) Phosphoserine. Serine 8 is subject to Phosphoserine. Residues lysine 48, lysine 96, lysine 154, and lysine 164 each participate in a glycyl lysine isopeptide (Lys-Gly) (interchain with G-Cter in ubiquitin) cross-link. At threonine 170 the chain carries Phosphothreonine. Residues lysine 172, lysine 181, lysine 193, and lysine 203 each participate in a glycyl lysine isopeptide (Lys-Gly) (interchain with G-Cter in ubiquitin) cross-link. The segment at 218 to 925 is interaction with ZC3HAV1; that stretch reads ECQNLSENSC…IPFDPAEMSK (708 aa). A Helicase ATP-binding domain is found at 251–430; it reads ALPAMKGKNT…DEALDYICKL (180 aa). Residue 264–271 coordinates ATP; it reads APTGCGKT. The DECH box signature appears at 372 to 375; sequence DECH. (Microbial infection) Deamidated asparagine; by herpes simplex virus 1/HHV-1 UL37 is present on residues asparagine 495 and asparagine 549. The region spanning 610–776 is the Helicase C-terminal domain; it reads KLEDLCFILQ…RLQTWDEAVF (167 aa). The mediates interaction with RNF135 stretch occupies residues 735 to 925; sequence GSKCFLLTSN…IPFDPAEMSK (191 aa). Threonine 770 carries the phosphothreonine; by CK2 modification. The RLR CTR domain maps to 794 to 925; the sequence is QEKPKPVPDK…IPFDPAEMSK (132 aa). Position 810 (cysteine 810) interacts with Zn(2+). Residue lysine 812 forms a Glycyl lysine isopeptide (Lys-Gly) (interchain with G-Cter in ubiquitin) linkage. Cysteine 813 is a binding site for Zn(2+). A phosphoserine; by CK2 mark is found at serine 854 and serine 855. Lysine 858 bears the N6-acetyllysine mark. Zn(2+) is bound by residues cysteine 864 and cysteine 869. An N6-acetyllysine modification is found at lysine 909.

This sequence belongs to the helicase family. RLR subfamily. Monomer; maintained as a monomer in an autoinhibited state. Upon binding of viral RNAs and conformational shift, homooligomerizes and forms filaments on these molecules. Interacts (via tandem CARD domain) with MAVS/IPS1 promoting its filamentation. Interacts with DHX58/LGP2, IKBKE, TBK1 and STING1. Interacts (via CARD domain) with TRIM25 (via SPRY domain). Interacts (double-stranded RNA-bound oligomeric form) with RNF135 (homodimer); involved in RNA length-dependent activation of the RIG-I signaling pathway. Interacts with CYLD. Interacts with NLRC5; blocks the interaction of MAVS/IPS1 to RIGI. Interacts with SRC. Interacts with DDX60. Interacts with isoform 2 of ZC3HAV1 (via zinc-fingers) in an RNA-dependent manner. Interacts (via tandem CARD domain) with SEC14L1; the interaction is direct and impairs the interaction of RIGI with MAVS/IPS1. Interacts with VCP/p97; interaction is direct and allows the recruitment of RNF125 and subsequent ubiquitination and degradation. Interacts with NOP53; may regulate RIGI through USP15-mediated 'Lys-63'-linked deubiquitination. Interacts with SIGLEC10, CBL and PTPN11; within a negative feedback loop leading to RIGI degradation. Interacts with LRRC25. Interacts with ZCCHC3; leading to activation of RIGI. Interacts with RNF123. Interacts with UBE2D3 and UBE2N; E2 ubiquitin ligases involved in RNF135-mediated ubiquitination of RIGI and activation of the RIG-I signaling pathway. Interacts with IFIT3. Interacts with DDX3X. Interacts with RTN3. Interacts with ARL16; this interaction is GTP-dependent and induced upon viral infection; this interaction suppresses the RNA sensing activity of RIGI. Interacts with DHX16; this interaction enhances RIGI-mediated antiviral response. Interacts with IRGM; promoting RIGI degradation. Interacts with IFI6; this interaction inhibits RIGI activation. Interacts with ECSIT; this interaction bridges RIGI to the MAVS complex at the mitochondrion. Interacts with YWHAE; this interaction drives RIGI at the mitochondrion. In terms of assembly, (Microbial infection) Interacts with protein Z of Guanarito virus, Machupo virus, Junin arenavirus and Sabia virus. This interaction disrupts its interaction with MAVS/IPS1, impeding downstream IRF3 and NF-kappa-B activation and resulting in decreased IFN-beta induction. As to quaternary structure, (Microbial infection) Interacts (via CARD domain) with Human respiratory syncytial virus A non-structural protein 2 (NS2) and this interaction disrupts its interaction with MAVS/IPS1, impeding downstream IRF3 activation. (Microbial infection) Interacts with Rotavirus A non-structural protein 1 (NSP1) and this interaction induces down-regulation of RIGI. In terms of assembly, (Microbial infection) Interacts with paramyxoviruses (Sendai virus, Nipah virus, Measles virus and Parainfluenza virus 5) protein V; this interaction inhibits TRIM25-mediated ubiquitination of RIG-I and prevents downstream RIG-I signaling thereby inhibiting the IFN responses. As to quaternary structure, (Microbial infection) Interacts with herpes simplex virus 1 protein US11; this interaction prevents the interaction of MAVS/IPS1 to RIGI. (Microbial infection) Interacts with herpes simplex virus 1 protein UL37; this interaction deaminates RIGI and inhibits its activation. In terms of assembly, (Microbial infection) Interacts with Severe fever with thrombocytopenia virus (SFTSV) NSs; this interaction this interaction sequesters RIGI in NSs-induced cytoplasmic inclusion bodies thereby inhibiting the IFN responses. Phosphorylated in resting cells and dephosphorylated in RNA virus-infected cells. Phosphorylation at Thr-770, Ser-854 and Ser-855 results in inhibition of its activity while dephosphorylation at these sites results in its activation. Post-translationally, ubiquitinated. 'Lys-63' ubiquitination by RNF135, which occurs after RNA-binding and homodimerization, releases the autoinhibition of the CARD domains by the RLR CTR domain, an essential step in the activation of the RIG-I signaling pathway. Lys-172 is the critical site of ubiquitination for MAVS/IPS1 binding and to induce anti-viral signal transduction. Lys-154, Lys-164 and Lys-172 are shared sites for RNF135-mediated and TRIM4-mediated ubiquitination. Also undergoes 'Lys-48' ubiquitination at Lys-181 by RNF125 that leads to proteasomal degradation. 'Lys-48' ubiquitination follows viral infection and is enhanced by 'Lys-63'-linked ubiquitination of the CARD domains that promotes interaction with VCP/p97 and subsequent recruitment of RNF125. Within a negative feedback loop involving SIGLEC10 and PTPN11, 'Lys-48' ubiquitination at Lys-812 by CBL also elicits the proteasomal degradation of RIGI. Deubiquitinated by CYLD, a protease that selectively cleaves 'Lys-63'-linked ubiquitin chains. Also probably deubiquitinated by USP17L2/USP17 that cleaves 'Lys-48'- and 'Lys-63'-linked ubiquitin chains and positively regulates the receptor. Ubiquitinated by TRIM40 via 'Lys-48'-linked ubiquitination; leading to proteasomal degradation. Deubiquitinated by USP27X that cleaves 'Lys-63'-linked ubiquitin chains and inhibits the innate immune receptor activity. Deubiquitinated by USP3 that also cleaves 'Lys-63'-linked ubiquitin chains and inhibits the innate immune receptor activity. Undergoes 'Lys-48'-linked ubiquitination catalyzed by MARCHF5 at Lys-193 and Lys-203, leading to proteasomal degradation. In terms of processing, phosphorylated at Ser-8 and Thr-170; these phosphorylations suppresse the TRIM25-mediated 'Lys-63'-linked ubiquitination of RIG-I and thereby prevents RIG-I downstream signaling. Dephosphorylated by phosphatases PPP1CA/PPP1CC; this step is essential to activate RIGI and initiate downstream signaling. ISGylated. Conjugated to ubiquitin-like protein ISG15 upon IFN-beta stimulation. ISGylation negatively regulates its function in antiviral signaling response. Post-translationally, sumoylated, probably by MUL1; inhibiting its polyubiquitination. In terms of processing, acetylated in response to RNA virus infection. Deacetylated by HDAC6 in the presence of viral mRNAs which is required for detection of viral RNA by RIGI. (Microbial infection) Deamidated on Asn-495 and Asn-549 by herpes simplex virus 1 protein UL37. These modifications eliminate RIGI detection of viral RNA and restriction of viral replication. Post-translationally, degraded via selective autophagy following interaction with IRGM. IRGM promotes RIGI recruitment to autophagosome membranes, promoting its SQSTM1/p62-dependent autophagic degradation. In terms of processing, (Microbial infection) Cleaved by the protease 3C of coxsackievirus B3, poliovirus and enterovirus 71 allowing the virus to disrupt the host type I interferon production. (Microbial infection) Phosphorylated at Ser-8 by herpes simplex virus 1 protein US3 leading to inhibition of critical RIGI activation steps. In terms of tissue distribution, present in vascular smooth cells (at protein level).

The protein localises to the cytoplasm. It localises to the cell projection. Its subcellular location is the ruffle membrane. The protein resides in the cytoskeleton. It is found in the cell junction. The protein localises to the tight junction. The catalysed reaction is ATP + H2O = ADP + phosphate + H(+). In terms of biological role, innate immune receptor that senses cytoplasmic viral nucleic acids and activates a downstream signaling cascade leading to the production of type I interferons and pro-inflammatory cytokines. Forms a ribonucleoprotein complex with viral RNAs on which it homooligomerizes to form filaments. The homooligomerization allows the recruitment of RNF135 an E3 ubiquitin-protein ligase that activates and amplifies the RIG-I-mediated antiviral signaling in an RNA length-dependent manner through ubiquitination-dependent and -independent mechanisms. Upon activation, associates with mitochondria antiviral signaling protein (MAVS/IPS1) that activates the IKK-related kinases TBK1 and IKBKE which in turn phosphorylate the interferon regulatory factors IRF3 and IRF7, activating transcription of antiviral immunological genes including the IFN-alpha and IFN-beta interferons. Ligands include 5'-triphosphorylated ssRNAs and dsRNAs but also short dsRNAs (&lt;1 kb in length). In addition to the 5'-triphosphate moiety, blunt-end base pairing at the 5'-end of the RNA is very essential. Overhangs at the non-triphosphorylated end of the dsRNA RNA have no major impact on its activity. A 3'overhang at the 5'triphosphate end decreases and any 5'overhang at the 5' triphosphate end abolishes its activity. Detects both positive and negative strand RNA viruses including members of the families Paramyxoviridae: Human respiratory syncytial virus and measles virus (MeV), Rhabdoviridae: vesicular stomatitis virus (VSV), Orthomyxoviridae: influenza A and B virus, Flaviviridae: Japanese encephalitis virus (JEV), hepatitis C virus (HCV), dengue virus (DENV) and west Nile virus (WNV). It also detects rotaviruses and reoviruses. Detects and binds to SARS-CoV-2 RNAs which is inhibited by m6A RNA modifications. Also involved in antiviral signaling in response to viruses containing a dsDNA genome such as Epstein-Barr virus (EBV). Detects dsRNA produced from non-self dsDNA by RNA polymerase III, such as Epstein-Barr virus-encoded RNAs (EBERs). May play important roles in granulocyte production and differentiation, bacterial phagocytosis and in the regulation of cell migration. The sequence is that of Antiviral innate immune response receptor RIG-I from Homo sapiens (Human).